The chain runs to 149 residues: Deoxyuridine 5'-triphosphate nucleotidohydrolase (149 aa).

Substrate contacts are provided by residues 70-72, Asn83, and 87-89; these read RSG and LID.

It belongs to the dUTPase family. The cofactor is Mg(2+).

The catalysed reaction is dUTP + H2O = dUMP + diphosphate + H(+). It functions in the pathway pyrimidine metabolism; dUMP biosynthesis; dUMP from dCTP (dUTP route): step 2/2. Functionally, this enzyme is involved in nucleotide metabolism: it produces dUMP, the immediate precursor of thymidine nucleotides and it decreases the intracellular concentration of dUTP so that uracil cannot be incorporated into DNA. This Blochmanniella pennsylvanica (strain BPEN) protein is Deoxyuridine 5'-triphosphate nucleotidohydrolase.